We begin with the raw amino-acid sequence, 76 residues long: Large ribosomal subunit protein uL24 (76 aa).

It belongs to the universal ribosomal protein uL24 family. As to quaternary structure, part of the 50S ribosomal subunit.

Its function is as follows. One of two assembly initiator proteins, it binds directly to the 5'-end of the 23S rRNA, where it nucleates assembly of the 50S subunit. One of the proteins that surrounds the polypeptide exit tunnel on the outside of the subunit. The chain is Large ribosomal subunit protein uL24 from Campylobacter hominis (strain ATCC BAA-381 / DSM 21671 / CCUG 45161 / LMG 19568 / NCTC 13146 / CH001A).